The chain runs to 335 residues: Anthranilate phosphoribosyltransferase (335 aa).

Residues G79, 82–83 (GD), S87, 89–92 (NIST), 107–115 (KHGNRSITS), and S119 contribute to the 5-phospho-alpha-D-ribose 1-diphosphate site. G79 contacts anthranilate. S91 serves as a coordination point for Mg(2+). N110 lines the anthranilate pocket. Anthranilate is bound at residue R165. 2 residues coordinate Mg(2+): D224 and E225.

The protein belongs to the anthranilate phosphoribosyltransferase family. In terms of assembly, homodimer. Mg(2+) serves as cofactor.

It carries out the reaction N-(5-phospho-beta-D-ribosyl)anthranilate + diphosphate = 5-phospho-alpha-D-ribose 1-diphosphate + anthranilate. The protein operates within amino-acid biosynthesis; L-tryptophan biosynthesis; L-tryptophan from chorismate: step 2/5. In terms of biological role, catalyzes the transfer of the phosphoribosyl group of 5-phosphorylribose-1-pyrophosphate (PRPP) to anthranilate to yield N-(5'-phosphoribosyl)-anthranilate (PRA). This is Anthranilate phosphoribosyltransferase from Lactococcus lactis subsp. cremoris (strain MG1363).